The sequence spans 313 residues: Type II methyltransferase M.NlaX (313 aa).

The region spanning 2–308 is the SAM-dependent MTase C5-type domain; it reads FKIIDLFAGI…EQMKAALSAV (307 aa). Cysteine 74 is an active-site residue.

This sequence belongs to the class I-like SAM-binding methyltransferase superfamily. C5-methyltransferase family.

The enzyme catalyses a 2'-deoxycytidine in DNA + S-adenosyl-L-methionine = a 5-methyl-2'-deoxycytidine in DNA + S-adenosyl-L-homocysteine + H(+). Its function is as follows. A methylase, recognizes the double-stranded sequence 5'-CCNGG-3' and methylates C-2 on both strands. May be the equivalent of dcm in this bacteria, or it may protect the DNA from cleavage by the putative NlaXP endonuclease. The sequence is that of Type II methyltransferase M.NlaX (nlaXM) from Neisseria lactamica.